A 72-amino-acid chain; its full sequence is DNA-directed RNA polymerase subunit omega (72 aa).

This sequence belongs to the RNA polymerase subunit omega family. The RNAP catalytic core consists of 2 alpha, 1 beta, 1 beta' and 1 omega subunit. When a sigma factor is associated with the core the holoenzyme is formed, which can initiate transcription.

The enzyme catalyses RNA(n) + a ribonucleoside 5'-triphosphate = RNA(n+1) + diphosphate. Its function is as follows. Promotes RNA polymerase assembly. Latches the N- and C-terminal regions of the beta' subunit thereby facilitating its interaction with the beta and alpha subunits. The protein is DNA-directed RNA polymerase subunit omega of Laribacter hongkongensis (strain HLHK9).